Consider the following 381-residue polypeptide: Cytochrome b (381 aa).

A run of 4 helical transmembrane segments spans residues F34–M54, W78–I99, W114–L134, and F179–L199. H84 and H98 together coordinate heme b. 2 residues coordinate heme b: H183 and H197. H202 serves as a coordination point for a ubiquinone. 4 helical membrane-spanning segments follow: residues Y227 to M247, L289 to H309, L321 to G341, and F348 to P368.

The protein belongs to the cytochrome b family. In terms of assembly, the cytochrome bc1 complex contains 3 respiratory subunits (MT-CYB, CYC1 and UQCRFS1), 2 core proteins (UQCRC1 and UQCRC2) and probably 6 low-molecular weight proteins. Heme b is required as a cofactor.

Its subcellular location is the mitochondrion inner membrane. Component of the ubiquinol-cytochrome c reductase complex (complex III or cytochrome b-c1 complex) that is part of the mitochondrial respiratory chain. The b-c1 complex mediates electron transfer from ubiquinol to cytochrome c. Contributes to the generation of a proton gradient across the mitochondrial membrane that is then used for ATP synthesis. The polypeptide is Cytochrome b (mt-cyb) (Scyliorhinus canicula (Small-spotted catshark)).